Consider the following 238-residue polypeptide: Tyrosine recombinase XerD-like (238 aa).

The region spanning 1–75 is the Core-binding (CB) domain; that stretch reads MKLPNEIEEY…SANQYFLFLY (75 aa). A Tyr recombinase domain is found at 90 to 238; sequence VQKKTQSSES…TITALEKYYR (149 aa). Catalysis depends on residues lysine 154 and arginine 204. The O-(3'-phospho-DNA)-tyrosine intermediate role is filled by tyrosine 236.

It belongs to the 'phage' integrase family. XerD-like subfamily.

Its subcellular location is the cytoplasm. In terms of biological role, putative tyrosine recombinase. Not involved in the cutting and rejoining of the recombining DNA molecules on dif(SL) site. This Lactococcus lactis subsp. cremoris (strain SK11) protein is Tyrosine recombinase XerD-like.